The chain runs to 502 residues: Probable glycine dehydrogenase (decarboxylating) subunit 2 (502 aa).

Lys273 is subject to N6-(pyridoxal phosphate)lysine.

The protein belongs to the GcvP family. C-terminal subunit subfamily. In terms of assembly, the glycine cleavage system is composed of four proteins: P, T, L and H. In this organism, the P 'protein' is a heterodimer of two subunits. Pyridoxal 5'-phosphate serves as cofactor.

It carries out the reaction N(6)-[(R)-lipoyl]-L-lysyl-[glycine-cleavage complex H protein] + glycine + H(+) = N(6)-[(R)-S(8)-aminomethyldihydrolipoyl]-L-lysyl-[glycine-cleavage complex H protein] + CO2. In terms of biological role, the glycine cleavage system catalyzes the degradation of glycine. The P protein binds the alpha-amino group of glycine through its pyridoxal phosphate cofactor; CO(2) is released and the remaining methylamine moiety is then transferred to the lipoamide cofactor of the H protein. The sequence is that of Probable glycine dehydrogenase (decarboxylating) subunit 2 from Staphylococcus epidermidis (strain ATCC 35984 / DSM 28319 / BCRC 17069 / CCUG 31568 / BM 3577 / RP62A).